Here is a 231-residue protein sequence, read N- to C-terminus: Orotidine 5'-phosphate decarboxylase (231 aa).

Residues Asp-12, Lys-34, 61 to 70 (DLKFHDIPNT), Thr-120, Arg-181, Gln-190, Gly-210, and Arg-211 each bind substrate. Residue Lys-63 is the Proton donor of the active site.

Belongs to the OMP decarboxylase family. Type 1 subfamily. In terms of assembly, homodimer.

It catalyses the reaction orotidine 5'-phosphate + H(+) = UMP + CO2. It participates in pyrimidine metabolism; UMP biosynthesis via de novo pathway; UMP from orotate: step 2/2. Functionally, catalyzes the decarboxylation of orotidine 5'-monophosphate (OMP) to uridine 5'-monophosphate (UMP). This is Orotidine 5'-phosphate decarboxylase from Alcanivorax borkumensis (strain ATCC 700651 / DSM 11573 / NCIMB 13689 / SK2).